The sequence spans 64 residues: DNA-binding protein 7b (64 aa).

The protein belongs to the 7 kDa DNA-binding/endoribonuclease P2 family. In terms of assembly, monomer.

Its subcellular location is the cytoplasm. Functionally, can constrain negative DNA supercoils. May be involved in maintaining the integrity of the genome at high temperature. The polypeptide is DNA-binding protein 7b (Saccharolobus islandicus (strain HVE10/4) (Sulfolobus islandicus)).